Reading from the N-terminus, the 430-residue chain is Aspartate--tRNA(Asp/Asn) ligase (430 aa).

Position 166 (Glu-166) interacts with L-aspartate. The segment at 188–191 (QLYK) is aspartate. L-aspartate is bound at residue Arg-210. ATP is bound by residues 210–212 (RAE), 218–220 (KHL), and Glu-353. Glu-353 and Ser-356 together coordinate Mg(2+). Ser-356 and Arg-360 together coordinate L-aspartate. ATP is bound at residue 401–404 (GAER).

Belongs to the class-II aminoacyl-tRNA synthetase family. Type 2 subfamily. In terms of assembly, homodimer. It depends on Mg(2+) as a cofactor.

It is found in the cytoplasm. It catalyses the reaction tRNA(Asx) + L-aspartate + ATP = L-aspartyl-tRNA(Asx) + AMP + diphosphate. Functionally, aspartyl-tRNA synthetase with relaxed tRNA specificity since it is able to aspartylate not only its cognate tRNA(Asp) but also tRNA(Asn). Reaction proceeds in two steps: L-aspartate is first activated by ATP to form Asp-AMP and then transferred to the acceptor end of tRNA(Asp/Asn). The sequence is that of Aspartate--tRNA(Asp/Asn) ligase from Methanospirillum hungatei JF-1 (strain ATCC 27890 / DSM 864 / NBRC 100397 / JF-1).